We begin with the raw amino-acid sequence, 345 residues long: DNA-directed RNA polymerase subunit alpha (345 aa).

The tract at residues 1-233 is alpha N-terminal domain (alpha-NTD); it reads MVRNWCSLIR…KQLQVFVGLH (233 aa). The interval 256–345 is alpha C-terminal domain (alpha-CTD); that stretch reads LNDILLRHVE…EEMGEIQEEG (90 aa).

It belongs to the RNA polymerase alpha chain family. Homodimer. The RNAP catalytic core consists of 2 alpha, 1 beta, 1 beta' and 1 omega subunit. When a sigma factor is associated with the core the holoenzyme is formed, which can initiate transcription.

The catalysed reaction is RNA(n) + a ribonucleoside 5'-triphosphate = RNA(n+1) + diphosphate. DNA-dependent RNA polymerase catalyzes the transcription of DNA into RNA using the four ribonucleoside triphosphates as substrates. The chain is DNA-directed RNA polymerase subunit alpha from Syntrophus aciditrophicus (strain SB).